The following is a 23-amino-acid chain: Basic phospholipase A2 homolog Vur-S49 analog (23 aa).

Positions 1 to 23 are disordered; it reads SVLEIGLMLQEETEKNPKTSYSI.

Post-translationally, contains 7 disulfide bonds. As to expression, expressed by the venom gland.

The protein resides in the secreted. The sequence is that of Basic phospholipase A2 homolog Vur-S49 analog from Vipera renardi (Steppe viper).